Consider the following 124-residue polypeptide: Small ribosomal subunit protein uS12 (124 aa).

The segment at 1–32 (MPTIQQLVRKGRQAKTTKTKTPALKGSPQRRG) is disordered. Over residues 9 to 18 (RKGRQAKTTK) the composition is skewed to basic residues. At Asp-89 the chain carries 3-methylthioaspartic acid. The tract at residues 105–124 (QGVRNRKQARSRYGAKKEKS) is disordered. The segment covering 108–118 (RNRKQARSRYG) has biased composition (basic residues).

The protein belongs to the universal ribosomal protein uS12 family. Part of the 30S ribosomal subunit. Contacts proteins S8 and S17. May interact with IF1 in the 30S initiation complex.

With S4 and S5 plays an important role in translational accuracy. Functionally, interacts with and stabilizes bases of the 16S rRNA that are involved in tRNA selection in the A site and with the mRNA backbone. Located at the interface of the 30S and 50S subunits, it traverses the body of the 30S subunit contacting proteins on the other side and probably holding the rRNA structure together. The combined cluster of proteins S8, S12 and S17 appears to hold together the shoulder and platform of the 30S subunit. This Salinispora arenicola (strain CNS-205) protein is Small ribosomal subunit protein uS12.